The following is a 523-amino-acid chain: Probable DNA ligase (523 aa).

Glu210 serves as a coordination point for ATP. Lys212 acts as the N6-AMP-lysine intermediate in catalysis. Residues Arg217, Arg232, Glu261, Phe317, Arg388, and Lys394 each contribute to the ATP site.

Belongs to the ATP-dependent DNA ligase family. Mg(2+) serves as cofactor.

It catalyses the reaction ATP + (deoxyribonucleotide)n-3'-hydroxyl + 5'-phospho-(deoxyribonucleotide)m = (deoxyribonucleotide)n+m + AMP + diphosphate.. In terms of biological role, DNA ligase that seals nicks in double-stranded DNA during DNA replication, DNA recombination and DNA repair. In Nocardia farcinica (strain IFM 10152), this protein is Probable DNA ligase.